Here is a 259-residue protein sequence, read N- to C-terminus: Small ribosomal subunit protein mS23 (259 aa).

It belongs to the mitochondrion-specific ribosomal protein mS23 family. As to quaternary structure, component of the mitochondrial small ribosomal subunit.

It is found in the mitochondrion. This is Small ribosomal subunit protein mS23 (RSM25) from Pyricularia oryzae (strain 70-15 / ATCC MYA-4617 / FGSC 8958) (Rice blast fungus).